Consider the following 353-residue polypeptide: Protein MGF 360-13L (353 aa).

It belongs to the asfivirus MGF 360 family.

Its function is as follows. Plays a role in virus cell tropism, and may be required for efficient virus replication in macrophages. This Ornithodoros (relapsing fever ticks) protein is Protein MGF 360-13L.